The following is an 83-amino-acid chain: Mitochondrial import inner membrane translocase subunit Tim8 B (83 aa).

The residue at position 2 (Ala2) is an N-acetylalanine. The Twin CX3C motif motif lies at 36–59 (CWDKCVEKPGNRLDSRTENCLSSC). 2 cysteine pairs are disulfide-bonded: Cys36-Cys59 and Cys40-Cys55.

It belongs to the small Tim family. Heterohexamer; possibly composed of 3 copies of TIMM8B and 3 copies of TIMM13, named soluble 70 kDa complex. Associates with the TIM22 complex, whose core is composed of TIMM22.

The protein resides in the mitochondrion inner membrane. Probable mitochondrial intermembrane chaperone that participates in the import and insertion of some multi-pass transmembrane proteins into the mitochondrial inner membrane. Also required for the transfer of beta-barrel precursors from the TOM complex to the sorting and assembly machinery (SAM complex) of the outer membrane. Acts as a chaperone-like protein that protects the hydrophobic precursors from aggregation and guide them through the mitochondrial intermembrane space. The protein is Mitochondrial import inner membrane translocase subunit Tim8 B (TIMM8B) of Bos taurus (Bovine).